We begin with the raw amino-acid sequence, 237 residues long: Demethylmenaquinone methyltransferase (237 aa).

S-adenosyl-L-methionine contacts are provided by residues T58, D79, and 107–108; that span reads NA.

This sequence belongs to the class I-like SAM-binding methyltransferase superfamily. MenG/UbiE family.

It carries out the reaction a 2-demethylmenaquinol + S-adenosyl-L-methionine = a menaquinol + S-adenosyl-L-homocysteine + H(+). Its pathway is quinol/quinone metabolism; menaquinone biosynthesis; menaquinol from 1,4-dihydroxy-2-naphthoate: step 2/2. Its function is as follows. Methyltransferase required for the conversion of demethylmenaquinol (DMKH2) to menaquinol (MKH2). This is Demethylmenaquinone methyltransferase from Lactiplantibacillus plantarum (strain ATCC BAA-793 / NCIMB 8826 / WCFS1) (Lactobacillus plantarum).